Consider the following 232-residue polypeptide: Small ribosomal subunit protein uS3 (232 aa).

Residues 39–107 (IREILHKELK…DVVINIVEIR (69 aa)) enclose the KH type-2 domain.

Belongs to the universal ribosomal protein uS3 family. Part of the 30S ribosomal subunit. Forms a tight complex with proteins S10 and S14.

Binds the lower part of the 30S subunit head. Binds mRNA in the 70S ribosome, positioning it for translation. The sequence is that of Small ribosomal subunit protein uS3 from Rhodopseudomonas palustris (strain BisB18).